Consider the following 250-residue polypeptide: Vacuolar protein sorting-associated protein 22 homolog 1 (250 aa).

A coiled-coil region spans residues 35 to 55 (MKEQLSTFRSQLEEFARKHKN).

The protein belongs to the SNF8 family. Component of the endosomal sorting complex required for transport II (ESCRT-II), composed of VPS22, VPS25 and VPS36.

The protein resides in the endosome. In terms of biological role, component of the endosomal sorting complex required for transport II (ESCRT-II), which is required for multivesicular body (MVB) formation and sorting of endosomal cargo proteins into MVBs. The ESCRT-II complex is probably involved in the recruitment of the ESCRT-III complex. This chain is Vacuolar protein sorting-associated protein 22 homolog 1 (VP22-1), found in Arabidopsis thaliana (Mouse-ear cress).